A 169-amino-acid polypeptide reads, in one-letter code: Peptide deformylase (169 aa).

Fe cation-binding residues include Cys-94 and His-136. The active site involves Glu-137. His-140 provides a ligand contact to Fe cation.

This sequence belongs to the polypeptide deformylase family. Requires Fe(2+) as cofactor.

The catalysed reaction is N-terminal N-formyl-L-methionyl-[peptide] + H2O = N-terminal L-methionyl-[peptide] + formate. Functionally, removes the formyl group from the N-terminal Met of newly synthesized proteins. Requires at least a dipeptide for an efficient rate of reaction. N-terminal L-methionine is a prerequisite for activity but the enzyme has broad specificity at other positions. The sequence is that of Peptide deformylase from Desulfotalea psychrophila (strain LSv54 / DSM 12343).